The following is a 180-amino-acid chain: Formate hydrogenlyase subunit 6 (180 aa).

4Fe-4S ferredoxin-type domains lie at Gly-31–Asp-60 and Leu-66–Glu-95. Cys-40, Cys-43, Cys-46, Cys-50, Cys-75, Cys-78, Cys-81, and Cys-85 together coordinate [4Fe-4S] cluster.

As to quaternary structure, FHL comprises of a formate dehydrogenase, unidentified electron carriers and a hydrogenase (isoenzyme 3). In this non-energy conserving pathway, molecular hydrogen and carbodioxide are released from formate.

Functionally, probable electron transfer protein for hydrogenase 3. The polypeptide is Formate hydrogenlyase subunit 6 (hycF) (Escherichia coli (strain K12)).